The sequence spans 535 residues: cAMP-regulated D2 protein (535 aa).

The N-terminal stretch at M1–A20 is a signal peptide. Residues C89 and C109 are joined by a disulfide bond. S213 (acyl-ester intermediate) is an active-site residue. A disulfide bond links C265 and C272. Residues E338 and H440 each act as charge relay system in the active site. N500 carries an N-linked (GlcNAc...) asparagine glycan.

It belongs to the type-B carboxylesterase/lipase family.

Its subcellular location is the cytoplasmic vesicle. It is found in the esterosome membrane. This is cAMP-regulated D2 protein (D2) from Dictyostelium discoideum (Social amoeba).